The primary structure comprises 600 residues: Estrogen receptor (600 aa).

The segment at 1–189 is modulating (transactivation AF-1); mediates interaction with MACROD1; sequence MTMTLHTKAS…IMESAKETRY (189 aa). S10 carries an O-linked (GlcNAc) serine glycan. The tract at residues 35-47 is required for interaction with NCOA1; sequence MERALGEVYVDNS. The tract at residues 35 to 179 is interaction with DDX5; self-association; that stretch reads MERALGEVYV…LSSSSEKGNM (145 aa). Phosphoserine; by CDK2 is present on residues S109 and S111. Position 123 is a phosphoserine (S123). The segment at 148 to 177 is disordered; that stretch reads DTGPPAFYRSNSDNRRQNGRERLSSSSEKG. Residues 159 to 170 show a composition bias toward basic and acidic residues; that stretch reads SDNRRQNGRERL. Phosphoserine; by CK2 is present on S172. NR C4-type zinc fingers lie at residues 190–210 and 226–250; these read CAVCNDYASGYHYGVWSCEGC and CPATNQCTIDKNRRKSCQACRLRKC. Positions 190–255 form a DNA-binding region, nuclear receptor; sequence CAVCNDYASG…RLRKCYEVGM (66 aa). Residues 190–315 form a mediates interaction with DNTTIP2 region; sequence CAVCNDYASG…TKKNSPALSL (126 aa). The segment at 256-315 is hinge; that stretch reads MKGGIRKDRRGGRMLKHKRQRDDLEGRNEMGTSGDMRAANLWPSPLVIKHTKKNSPALSL. R265 carries the post-translational modification Asymmetric dimethylarginine; by PRMT1. The interaction with AKAP13 stretch occupies residues 267 to 600; that stretch reads GRMLKHKRQR…PEAEGFPNTI (334 aa). The interval 269–600 is self-association; that stretch reads MLKHKRQRDD…PEAEGFPNTI (332 aa). The NR LBD domain maps to 316 to 552; sequence TADQMVSALL…DLLLEMLDAH (237 aa). The interval 316–600 is transactivation AF-2; it reads TADQMVSALL…PEAEGFPNTI (285 aa). E358 and R399 together coordinate 17beta-estradiol. C452 is lipidated: S-palmitoyl cysteine. 17beta-estradiol is bound at residue H529. Y542 carries the phosphotyrosine; by Tyr-kinases modification. The interval 558–581 is disordered; it reads ASRMGVPPEEPSQSQLTTTSSTSA. Over residues 569 to 581 the composition is skewed to low complexity; the sequence is SQSQLTTTSSTSA. A glycan (O-linked (GlcNAc) threonine) is linked at T576.

It belongs to the nuclear hormone receptor family. NR3 subfamily. As to quaternary structure, interacts with BCAS3. Binds DNA as a homodimer. Can form a heterodimer with ESR2. Interacts with coactivator NCOA5. Interacts with PELP1, the interaction is enhanced by 17-beta-estradiol; the interaction increases ESR1 transcriptional activity. Interacts with NCOA7; the interaction is ligand-inducible. Interacts with AKAP13, CUEDC2, HEXIM1, KDM5A, MAP1S, SMARD1, and UBE1C. Interacts with MUC1; the interaction is stimulated by 7 beta-estradiol (E2) and enhances ESR1-mediated transcription. Interacts with DNTTIP2, and UIMC1. Interacts with KMT2D/MLL2. Interacts with ATAD2; the interaction is enhanced by estradiol. Interacts with KIF18A and LDB1. Interacts with RLIM (via its C-terminus). Interacts with MACROD1. Interacts with SH2D4A and PLCG. Interacts with SH2D4A; the interaction blocks binding to PLCG and inhibits estrogen-induced cell proliferation. Interacts with DYNLL1. Interacts with CCDC62; the interaction requires estradiol and appears to enhance the transcription of target genes. Interacts with NR2C1; the interaction prevents homodimerization of ESR1 and suppresses its transcriptional activity and cell growth. Interacts with DNAAF4. Interacts with PRMT2. Interacts with RBFOX2. Interacts with EP300; the interaction is estrogen-dependent and enhanced by CITED1. Interacts with CITED1; the interaction is estrogen-dependent. Interacts with FAM120B, FOXL2, PHB2 and SLC30A9. Interacts with coactivators NCOA3 and NCOA6. Interacts with STK3/MST2 only in the presence of SAV1 and vice-versa. Binds to CSNK1D. Interacts with NCOA2; NCOA2 can interact with ESR1 AF-1 and AF-2 domains simultaneously and mediate their transcriptional synergy. Interacts with DDX5. Interacts with NCOA1; the interaction seems to require a self-association of N-terminal and C-terminal regions. Interacts with ZNF366, DDX17, NFKB1, RELA, SP1 and SP3. Interacts with NRIP1. Interacts with GPER1; the interaction occurs in an estrogen-dependent manner. Interacts with TRIP4 (ufmylated); estrogen dependent. Interacts with LMTK3; the interaction phosphorylates ESR1 (in vitro) and protects it against proteasomal degradation. Interacts with CCAR2 (via N-terminus) in a ligand-independent manner. Interacts with ZFHX3. Interacts with SFR1 in a ligand-dependent and -independent manner. Interacts with DCAF13, LATS1 and DCAF1; regulates ESR1 ubiquitination and ubiquitin-mediated proteasomal degradation. Interacts (via DNA-binding domain) with POU4F2 (C-terminus); this interaction increases the estrogen receptor ESR1 transcriptional activity in a DNA- and ligand 17-beta-estradiol-independent manner. Interacts with ESRRB isoform 1. Interacts with UBE3A and WBP2. Interacts with GTF2B. Interacts with RBM39. In the absence of hormonal ligand, interacts with TACC1. Interacts with PI3KR1 or PI3KR2 and PTK2/FAK1. Interacts with SRC. Interacts with BAG1; the interaction is promoted in the absence of estradiol (17-beta-estradiol/E2). Interacts with and ubiquitinated by STUB1; the interaction is promoted in the absence of estradiol (17-beta-estradiol/E2). Interacts with NEDD8. Phosphorylated by cyclin A/CDK2 and CK1. Phosphorylation probably enhances transcriptional activity. Dephosphorylation at Ser-123 by PPP5C inhibits its transactivation activity. Phosphorylated by LMTK3 (in vitro). Post-translationally, ubiquitinated; regulated by LATS1 via DCAF1 it leads to ESR1 proteasomal degradation. Deubiquitinated by OTUB1. Ubiquitinated by STUB1/CHIP; in the CA1 hippocampal region following loss of endogenous circulating estradiol (17-beta-estradiol/E2). Ubiquitinated by UBR5, leading to its degradation: UBR5 specifically recognizes and binds ligand-bound ESR1 when it is not associated with coactivators (NCOAs). In presence of NCOAs, the UBR5-degron is not accessible, preventing its ubiquitination and degradation. In terms of processing, palmitoylated at Cys-452 by ZDHHC7 and ZDHHC21. This modification is required for plasma membrane targeting and for rapid intracellular signaling via ERK and AKT kinases and cAMP generation, but not for signaling mediated by the nuclear hormone receptor. Dimethylated by PRMT1 at Arg-265. The methylation may favor cytoplasmic localization. Demethylated by JMJD6 at Arg-265. As to expression, expressed in the CA1 region of the hippocampus, expression decreases with age (at protein level). Expressed in the uterus (at protein level).

It localises to the nucleus. The protein localises to the cytoplasm. It is found in the golgi apparatus. Its subcellular location is the cell membrane. Functionally, nuclear hormone receptor. The steroid hormones and their receptors are involved in the regulation of eukaryotic gene expression and affect cellular proliferation and differentiation in target tissues. Ligand-dependent nuclear transactivation involves either direct homodimer binding to a palindromic estrogen response element (ERE) sequence or association with other DNA-binding transcription factors, such as AP-1/c-Jun, c-Fos, ATF-2, Sp1 and Sp3, to mediate ERE-independent signaling. Ligand binding induces a conformational change allowing subsequent or combinatorial association with multiprotein coactivator complexes through LXXLL motifs of their respective components. Mutual transrepression occurs between the estrogen receptor (ER) and NF-kappa-B in a cell-type specific manner. Decreases NF-kappa-B DNA-binding activity and inhibits NF-kappa-B-mediated transcription from the IL6 promoter and displace RELA/p65 and associated coregulators from the promoter. Recruited to the NF-kappa-B response element of the CCL2 and IL8 promoters and can displace CREBBP. Present with NF-kappa-B components RELA/p65 and NFKB1/p50 on ERE sequences. Can also act synergistically with NF-kappa-B to activate transcription involving respective recruitment adjacent response elements; the function involves CREBBP. Can activate the transcriptional activity of TFF1. Also mediates membrane-initiated estrogen signaling involving various kinase cascades. Essential for MTA1-mediated transcriptional regulation of BRCA1 and BCAS3. Maintains neuronal survival in response to ischemic reperfusion injury when in the presence of circulating estradiol (17-beta-estradiol/E2). The chain is Estrogen receptor (Esr1) from Rattus norvegicus (Rat).